The sequence spans 333 residues: Electron transfer flavoprotein subunit alpha, mitochondrial (333 aa).

The transit peptide at 1–19 (MFRAAAPGQLRRAASLLRF) directs the protein to the mitochondrion. The domain I stretch occupies residues 20–204 (QSTLVIAEHA…EISEWLDQKL (185 aa)). K59 is modified (N6-acetyllysine; alternate). Position 59 is an N6-succinyllysine; alternate (K59). Residue K62 is modified to N6-acetyllysine. N6-acetyllysine; alternate is present on K69. K69 carries the post-translational modification N6-succinyllysine; alternate. K75 bears the N6-acetyllysine mark. K85 is subject to N6-acetyllysine; alternate. At K85 the chain carries N6-succinyllysine; alternate. T93 carries the post-translational modification Phosphothreonine. 2 positions are modified to N6-acetyllysine: K101 and K139. S140 is subject to Phosphoserine. The residue at position 158 (K158) is an N6-acetyllysine; alternate. Position 158 is an N6-succinyllysine; alternate (K158). At K164 the chain carries N6-acetyllysine. At K187 the chain carries N6-succinyllysine. The residue at position 203 (K203) is an N6-acetyllysine; alternate. The residue at position 203 (K203) is an N6-succinyllysine; alternate. Residues 205–333 (TKSDRPELTG…PEMTEILKKK (129 aa)) form a domain II region. Residue K216 is modified to N6-succinyllysine. R223 serves as a coordination point for FAD. K226 and K232 each carry N6-acetyllysine; alternate. An N6-succinyllysine; alternate mark is found at K226 and K232. Residues S248, 263–266 (VGQT), 281–286 (SGAIQH), and N300 each bind FAD. Residue K301 is modified to N6-succinyllysine. Position 318 to 319 (318 to 319 (DL)) interacts with FAD.

The protein belongs to the ETF alpha-subunit/FixB family. Heterodimer composed of ETFA and ETFB. Identified in a complex that contains ETFA, ETFB and ETFRF1. Interaction with ETFRF1 promotes dissociation of the bound FAD and loss of electron transfer activity. Interacts with TASOR. Requires FAD as cofactor. Post-translationally, the N-terminus is blocked.

It is found in the mitochondrion matrix. In terms of biological role, heterodimeric electron transfer flavoprotein that accepts electrons from several mitochondrial dehydrogenases, including acyl-CoA dehydrogenases, glutaryl-CoA and sarcosine dehydrogenase. It transfers the electrons to the main mitochondrial respiratory chain via ETF-ubiquinone oxidoreductase (ETF dehydrogenase). Required for normal mitochondrial fatty acid oxidation and normal amino acid metabolism. This is Electron transfer flavoprotein subunit alpha, mitochondrial (ETFA) from Homo sapiens (Human).